Reading from the N-terminus, the 460-residue chain is Flavonol 3-O-glucosyltransferase (460 aa).

Residue H23 is the Proton acceptor of the active site. Positions 23 and 88 each coordinate an anthocyanidin. D123 functions as the Charge relay in the catalytic mechanism. Position 145 (T145) interacts with UDP-alpha-D-glucose. H154 provides a ligand contact to an anthocyanidin. 7 residues coordinate UDP-alpha-D-glucose: A339, Q341, H356, W359, N360, S361, and E364. G379 serves as a coordination point for an anthocyanidin. UDP-alpha-D-glucose contacts are provided by D380 and Q381.

This sequence belongs to the UDP-glycosyltransferase family.

The catalysed reaction is a flavonol + UDP-alpha-D-glucose = a flavonol 3-O-beta-D-glucoside + UDP + H(+). It carries out the reaction quercetin + UDP-alpha-D-glucose = quercetin 3-O-beta-D-glucoside + UDP + H(+). It participates in flavonoid metabolism. Functionally, flavonol 3-O-glucosyltransferase that catalyzes the transfer of glucose from UDP-glucose to the 3-OH position of quercetin and kaempferol. Possesses high quercetin 3-O-glucosyltransferase activity in vitro. Catalyzes the glycosylation of anthocyanins from UDP-glucose. Also active in vitro on benzoates and benzoate derivatives. This chain is Flavonol 3-O-glucosyltransferase, found in Arabidopsis thaliana (Mouse-ear cress).